The chain runs to 56 residues: Small ribosomal subunit protein uS14 (56 aa).

Cysteine 21, cysteine 24, cysteine 39, and cysteine 42 together coordinate Zn(2+).

Belongs to the universal ribosomal protein uS14 family. Component of the 40S small ribosomal subunit. Requires Zn(2+) as cofactor.

The protein resides in the cytoplasm. It localises to the cytosol. The protein localises to the rough endoplasmic reticulum. In terms of biological role, component of the small ribosomal subunit. The ribosome is a large ribonucleoprotein complex responsible for the synthesis of proteins in the cell. This Hippocampus comes (Tiger tail seahorse) protein is Small ribosomal subunit protein uS14 (rps29).